The chain runs to 589 residues: Kelch-like protein diablo (589 aa).

Positions 1-22 (MGDVLISDRPPSPARLSHTSEK) are disordered. The 68-residue stretch at 41-108 (CDVVINVSGR…CYTSHIVVEE (68 aa)) folds into the BTB domain. One can recognise a BACK domain in the interval 143–245 (CLGIRAFADT…SPKFLVGTVG (103 aa)). Kelch repeat units lie at residues 292–338 (VLFA…VLND), 340–386 (LYAV…VLDG), 387–433 (FLYA…VLGG), 435–480 (LYAI…VFNN), 482–527 (IYAV…VVNG), and 528–574 (QLYA…VMRA).

Its pathway is protein modification; protein ubiquitination. Functionally, probable substrate-specific adapter of an E3 ubiquitin-protein ligase complex which mediates the ubiquitination and subsequent proteasomal degradation of target proteins. May have a role in synapse differentiation and growth. The protein is Kelch-like protein diablo of Aedes aegypti (Yellowfever mosquito).